An 84-amino-acid chain; its full sequence is Large ribosomal subunit protein bL31B (84 aa).

Belongs to the bacterial ribosomal protein bL31 family. Type B subfamily. In terms of assembly, part of the 50S ribosomal subunit.

The protein is Large ribosomal subunit protein bL31B of Alkalilimnicola ehrlichii (strain ATCC BAA-1101 / DSM 17681 / MLHE-1).